We begin with the raw amino-acid sequence, 614 residues long: Vitamin B12 transporter BtuB (614 aa).

The signal sequence occupies residues 1-20 (MIKKASLLTACSVTAFSAWA). Residues 21-157 (QDTSPDTLVV…NIITTRDEPG (137 aa)) lie on the Periplasmic side of the membrane. The TonB box signature appears at 26–33 (DTLVVTAN). Residues 38-152 (PRSTVLAPTT…IGGVVNIITT (115 aa)) enclose the TBDR plug domain. Cyanocob(III)alamin contacts are provided by residues Leu-83, Ser-85, Asn-92, and 110–111 (VS). The 460-residue stretch at 155-614 (EPGTEISAGW…EYTLSGSYTF (460 aa)) folds into the TBDR beta-barrel domain. A beta stranded membrane pass occupies residues 158–165 (TEISAGWG). The Extracellular segment spans residues 166 to 168 (SNS). A beta stranded membrane pass occupies residues 169–178 (YQNYDVSTQQ). The Periplasmic portion of the chain corresponds to 179–183 (QLGDK). The beta stranded transmembrane segment at 184-195 (TRVTLLGDYAHT) threads the bilayer. Residues 196–216 (HGYDVVAYGNTGTQAQTDNDG) are Extracellular-facing. Ca(2+)-binding residues include Asp-199, Gln-211, Asp-213, and Asp-215. Residues 217–227 (FLSKTLYGALE) form a beta stranded membrane-spanning segment. Residues 228 to 231 (HNFT) lie on the Periplasmic side of the membrane. A beta stranded membrane pass occupies residues 232 to 248 (DAWSGFVRGYGYDNRTN). Positions 249 and 250 each coordinate Ca(2+). At 249–262 (YDAYYSPGSPLLDT) the chain is on the extracellular side. Ala-251 provides a ligand contact to cyanocob(III)alamin. Position 261 (Asp-261) interacts with Ca(2+). Residues 263–277 (RKLYSQSWDAGLRYN) form a beta stranded membrane-spanning segment. Residue Gly-278 is a topological domain, periplasmic. The chain crosses the membrane as a beta stranded span at residues 279-296 (ELIKSQLITSYSHSKDYN). The Extracellular portion of the chain corresponds to 297–308 (YDPHYGRYDSSA). Residue Thr-309 participates in cyanocob(III)alamin binding. The beta stranded transmembrane segment at 309–325 (TLDEMKQYTVQWANNVI) threads the bilayer. The Periplasmic portion of the chain corresponds to 326-327 (VG). Residues 328–337 (HGSIGAGVDW) form a beta stranded membrane-spanning segment. Residues 338–352 (QKQTTTPGTGYVEDG) are Extracellular-facing. Residues 353–369 (YDQRNTGIYLTGLQQVG) form a beta stranded membrane-spanning segment. Position 370 (Asp-370) is a topological domain, periplasmic. The chain crosses the membrane as a beta stranded span at residues 371-381 (FTFEGAARSDD). The Extracellular portion of the chain corresponds to 382–384 (NSQ). A beta stranded transmembrane segment spans residues 385–400 (FGRHGTWQTSAGWEFI). Over 401 to 402 (EG) the chain is Periplasmic. Residues 403–417 (YRFIASYGTSYKAPN) form a beta stranded membrane-spanning segment. The Extracellular portion of the chain corresponds to 418–433 (LGQLYGFYGNPNLDPE). The beta stranded transmembrane segment at 434-443 (KSKQWEGAFE) threads the bilayer. Topologically, residues 444–448 (GLTAG) are periplasmic. A beta stranded membrane pass occupies residues 449 to 458 (VNWRISGYRN). Topologically, residues 459–472 (DVSDLIDYDDHTLK) are extracellular. A beta stranded transmembrane segment spans residues 473 to 490 (YYNEGKARIKGVEATANF). Over 491–493 (DTG) the chain is Periplasmic. Residues 494–509 (PLTHTVSYDYVDARNA) traverse the membrane as a beta stranded segment. The Extracellular segment spans residues 510-516 (ITDTPLL). Position 517 (Arg-517) interacts with cyanocob(III)alamin. A beta stranded transmembrane segment spans residues 517–529 (RRAKQQVKYQLDW). The Periplasmic segment spans residues 530 to 534 (QLYDF). A beta stranded transmembrane segment spans residues 535-550 (DWGITYQYLGTRYDKD). Tyr-551 contacts cyanocob(III)alamin. Residues 551 to 557 (YSSYPYQ) are Extracellular-facing. The chain crosses the membrane as a beta stranded span at residues 558-572 (TVKMGGVSLWDLAVA). The Periplasmic segment spans residues 573-584 (YPVTSHLTVRGK). The chain crosses the membrane as a beta stranded span at residues 585–596 (IANLFDKDYETV). Topologically, residues 597–601 (YGYQT) are extracellular. The short motif at 597–614 (YGYQTAGREYTLSGSYTF) is the TonB C-terminal box element. The chain crosses the membrane as a beta stranded span at residues 602–614 (AGREYTLSGSYTF).

The protein belongs to the TonB-dependent receptor family. BtuB (TC 1.B.14.3.1) subfamily. Interacts with TonB. In terms of assembly, (Microbial infection) The hairpin motif of the receptor-binding domain of colicin E3 (ColE3) interacts with BtuB without displacing BtuB's central plug. An N-terminal fragment of E3 binds OmpF; trimeric complexes with ColE3, BtuB and OmpF can be cross-linked and immunoprecipitated.

It localises to the cell outer membrane. Calcium increases vitamin B12 binding affinity by a factor of 50-100. Its activity is regulated as follows. (Microbial infection) Colicins E1, E3 and K inhibit cyanocobalamin (CN-B12) uptake; E1 and E3 inhibit binding of CN-B12 to cells while colicin K inhibits a later, energy-dependent step of CN-B12. Functionally, involved in the active translocation of vitamin B12 (cyanocobalamin) across the outer membrane to the periplasmic space. It derives its energy for transport by interacting with the trans-periplasmic membrane protein TonB. (Microbial infection) Acts as a receptor for bacteriophages BF23 and C1, and for A and E colicins. Cyanocobalamin (CN-B12) in solid medium protects against colicins E1 and E3. Does not act as the translocon for colicin E3 (ColE3). The translocon is OmpF; trimeric complexes with ColE3, BtuB and OmpF can be cross-linked and immunoprecipitated. This Escherichia coli (strain K12) protein is Vitamin B12 transporter BtuB.